Reading from the N-terminus, the 337-residue chain is Ketol-acid reductoisomerase (NADP(+)) (337 aa).

One can recognise a KARI N-terminal Rossmann domain in the interval 1 to 180; the sequence is MFYEKDADVD…GGGKSGIIET (180 aa). NADP(+) contacts are provided by residues 22–25, Arg46, Ser49, Ser51, and 81–84; these read YGSQ and DELQ. His106 is a catalytic residue. Gly132 contributes to the NADP(+) binding site. The 146-residue stretch at 181–326 folds into the KARI C-terminal knotted domain; that stretch reads TFKDECETDL…AELRAMMPWI (146 aa). Positions 189, 193, 225, and 229 each coordinate Mg(2+). A substrate-binding site is contributed by Ser250.

This sequence belongs to the ketol-acid reductoisomerase family. Mg(2+) serves as cofactor.

It catalyses the reaction (2R)-2,3-dihydroxy-3-methylbutanoate + NADP(+) = (2S)-2-acetolactate + NADPH + H(+). The catalysed reaction is (2R,3R)-2,3-dihydroxy-3-methylpentanoate + NADP(+) = (S)-2-ethyl-2-hydroxy-3-oxobutanoate + NADPH + H(+). It participates in amino-acid biosynthesis; L-isoleucine biosynthesis; L-isoleucine from 2-oxobutanoate: step 2/4. Its pathway is amino-acid biosynthesis; L-valine biosynthesis; L-valine from pyruvate: step 2/4. In terms of biological role, involved in the biosynthesis of branched-chain amino acids (BCAA). Catalyzes an alkyl-migration followed by a ketol-acid reduction of (S)-2-acetolactate (S2AL) to yield (R)-2,3-dihydroxy-isovalerate. In the isomerase reaction, S2AL is rearranged via a Mg-dependent methyl migration to produce 3-hydroxy-3-methyl-2-ketobutyrate (HMKB). In the reductase reaction, this 2-ketoacid undergoes a metal-dependent reduction by NADPH to yield (R)-2,3-dihydroxy-isovalerate. This is Ketol-acid reductoisomerase (NADP(+)) from Pelagibacter ubique (strain HTCC1062).